The chain runs to 138 residues: RuBisCO chaperone RbcX (138 aa).

The segment at Val118–Ser138 is disordered. The span at Pro122–Ser138 shows a compositional bias: polar residues.

This sequence belongs to the RbcX family. As to quaternary structure, homodimer. Interacts with the exposed C-terminal peptide of RbcL via its central cleft, contacts a second RbcL monomer via its peripheral polar surface.

Its subcellular location is the carboxysome. The protein resides in the cytoplasm. An RbcL-specific chaperone. The central cleft of the RbcX homodimer (RbcX2) binds the C-terminus of an RbcL monomer, stabilizing the C-terminus and probably preventing its reassociation with chaperonin GroEL-ES. At the same time the peripheral region of RbcX2 binds a second RbcL monomer, bridging the RbcL homodimers in the correct orientation. The RbcX2(2)-bound RbcL dimers then assemble into the RbcL8 core (RbcL8-(RbcX2)8). RbcS binding triggers the release of RbcX2. This chain is RuBisCO chaperone RbcX, found in Synechocystis sp. (strain ATCC 27184 / PCC 6803 / Kazusa).